The following is a 419-amino-acid chain: Creatine kinase S-type, mitochondrial (419 aa).

The transit peptide at 1 to 39 (MASAFSKLLTGRNASLLFTTLGTSALTTGYLLNRQKVSA) directs the protein to the mitochondrion. The segment at 40-64 (DAREQHKLFPPSADYPDLRKHNNCM) is cardiolipin-binding. The region spanning 46–132 (KLFPPSADYP…FDPVIKLRHN (87 aa)) is the Phosphagen kinase N-terminal domain. A Phosphagen kinase C-terminal domain is found at 159–401 (YVLSSRVRTG…NYLVDCEKKL (243 aa)). ATP is bound by residues 162 to 166 (SSRVR) and His-225. Residue Tyr-255 is modified to Phosphotyrosine. Residues Arg-270, Arg-326, 354–359 (RGTGGV), and Asp-369 contribute to the ATP site. Phosphothreonine is present on Thr-356.

Belongs to the ATP:guanido phosphotransferase family. Exists as an octamer composed of four CKMT2 homodimers.

Its subcellular location is the mitochondrion inner membrane. The enzyme catalyses creatine + ATP = N-phosphocreatine + ADP + H(+). Its function is as follows. Reversibly catalyzes the transfer of phosphate between ATP and various phosphogens (e.g. creatine phosphate). Creatine kinase isoenzymes play a central role in energy transduction in tissues with large, fluctuating energy demands, such as skeletal muscle, heart, brain and spermatozoa. This is Creatine kinase S-type, mitochondrial (Ckmt2) from Mus musculus (Mouse).